Here is a 709-residue protein sequence, read N- to C-terminus: Translation initiation factor IF-2 (709 aa).

Basic and acidic residues-rich tracts occupy residues 47–70 and 105–121; these read DHQY…EKPK and KGKE…EKKL. A disordered region spans residues 47-157; that stretch reads DHQYRPNTGK…QPAKKEKELP (111 aa). The span at 125–137 shows a compositional bias: basic residues; that stretch reads AKKKGKGPAKGKK. Low complexity predominate over residues 138 to 149; that stretch reads QAAPAAKQAPQP. The tr-type G domain occupies 240 to 409; that stretch reads ERPPVVTIMG…LLVSEMEELK (170 aa). The tract at residues 249-256 is G1; the sequence is GHVDHGKT. 249-256 is a binding site for GTP; sequence GHVDHGKT. Residues 274-278 are G2; it reads GITQH. The tract at residues 295-298 is G3; that stretch reads DTPG. GTP is bound by residues 295–299 and 349–352; these read DTPGH and NKID. The interval 349-352 is G4; it reads NKID. The tract at residues 385–387 is G5; that stretch reads SAK.

This sequence belongs to the TRAFAC class translation factor GTPase superfamily. Classic translation factor GTPase family. IF-2 subfamily.

The protein localises to the cytoplasm. Its function is as follows. One of the essential components for the initiation of protein synthesis. Protects formylmethionyl-tRNA from spontaneous hydrolysis and promotes its binding to the 30S ribosomal subunits. Also involved in the hydrolysis of GTP during the formation of the 70S ribosomal complex. The sequence is that of Translation initiation factor IF-2 from Geobacillus kaustophilus (strain HTA426).